Reading from the N-terminus, the 399-residue chain is MLIVEGVRIAEELENLPKEVRIFDTTLRDGEQTPGISFTKEQKLMIARQLAKLGVASIEAGFPAVSQGEFEAVKAIAREGLGPEIVALARANKRDIDKALDADVDAIHVFIAASDIHLKYKLRMTREEALRRAVEAVEYAKSHGVTVEFSPEDGTRADLNYLYTMVEAVVDAGADRVDIPDTVGVMTPTRMKYLIKFILPAAKGRIVSVHCHNDFGLAVANSIAGIEAGARQAHVTVNGIGERAGNAALEEVVAALEFLLNVRTGVNTKLLYETSLLVSKITGIPIPPNKPIVGENVFSHESGIHVHGVINNPFTYEPIQPEMVGQRRRIVLGKHSGRHGVEYALKTLGYPTDPDVVLRVLDEVKRLGDMGIRVTEDKLREIVEKVLEERERAKEAATS.

Residues 20–272 enclose the Pyruvate carboxyltransferase domain; it reads VRIFDTTLRD…RTGVNTKLLY (253 aa). Residues Asp29, His210, His212, and Asn246 each coordinate a divalent metal cation.

The protein belongs to the alpha-IPM synthase/homocitrate synthase family. As to quaternary structure, homodimer. Requires a divalent metal cation as cofactor.

It carries out the reaction 3-methyl-2-oxobutanoate + acetyl-CoA + H2O = (2S)-2-isopropylmalate + CoA + H(+). The protein operates within amino-acid biosynthesis; L-leucine biosynthesis; L-leucine from 3-methyl-2-oxobutanoate: step 1/4. In terms of biological role, catalyzes the condensation of the acetyl group of acetyl-CoA with 3-methyl-2-oxobutanoate (2-oxoisovalerate) to form 3-carboxy-3-hydroxy-4-methylpentanoate (2-isopropylmalate). The chain is Probable 2-isopropylmalate synthase (leuA) from Ignicoccus hospitalis (strain KIN4/I / DSM 18386 / JCM 14125).